A 98-amino-acid chain; its full sequence is N(2)-fixation sustaining protein CowN (98 aa).

It belongs to the CowN family.

Is required to sustain N(2)-dependent growth in the presence of low levels of carbon monoxide (CO). Probably acts by protecting the N(2) fixation ability of the nitrogenase complex, which is inactivated in the presence of CO. The protein is N(2)-fixation sustaining protein CowN of Paramagnetospirillum magneticum (strain ATCC 700264 / AMB-1) (Magnetospirillum magneticum).